The sequence spans 230 residues: Claudin-2 (230 aa).

At 1-7 the chain is on the cytoplasmic side; it reads MASLGLQ. A helical transmembrane segment spans residues 8 to 28; sequence LVGYILGLLGLLGTLVAMLLP. At 29–81 the chain is on the extracellular side; it reads SWKTSSYVGASIVTAVGFSKGLWMECATHSTGITQCDIYSTLLGLPADIQAAQ. The cysteines at positions 54 and 64 are disulfide-linked. A helical transmembrane segment spans residues 82 to 102; that stretch reads AMMVTSSAISSLACIISVVGM. Residues 103-116 lie on the Cytoplasmic side of the membrane; it reads RCTVFCQESRAKDR. The chain crosses the membrane as a helical span at residues 117-137; sequence VAVAGGVFFILGGLLGFIPVA. Over 138 to 162 the chain is Extracellular; that stretch reads WNLHGILRDFYSPLVPDSMKFEIGE. A helical transmembrane segment spans residues 163-183; it reads ALYLGIISSLFSLIAGIILCF. At 184-230 the chain is on the cytoplasmic side; sequence SCSSQRNRSNYYDAYQAQPLATRSSPRPGQPPKVKSEFNSYSLTGYV. Residues 205-230 are disordered; that stretch reads TRSSPRPGQPPKVKSEFNSYSLTGYV. Lys-218 is covalently cross-linked (Glycyl lysine isopeptide (Lys-Gly) (interchain with G-Cter in SUMO)). Phosphoserine occurs at positions 219 and 223. Positions 220–230 are enriched in polar residues; sequence EFNSYSLTGYV. The tract at residues 229-230 is interactions with TJP1, TJP2 and TJP3; sequence YV.

This sequence belongs to the claudin family. As to quaternary structure, can form homo- and heteropolymers with other claudins to mediate paracellular barrier and channel functions of tight junctions in response to physiological stimuli. Homopolymers interact with CLDN3, but not CLDN1, homopolymers. Directly interacts with TJP1/ZO-1, TJP2/ZO-2 and TJP3/ZO-3. The disulfide bond is necessary for pore formation, but is not required for correct protein trafficking.

The protein localises to the cell junction. Its subcellular location is the tight junction. It is found in the cell membrane. The catalysed reaction is Na(+)(in) = Na(+)(out). It catalyses the reaction K(+)(in) = K(+)(out). It carries out the reaction Rb(+)(in) = Rb(+)(out). The enzyme catalyses Li(+)(in) = Li(+)(out). The catalysed reaction is Cs(+)(in) = Cs(+)(out). It catalyses the reaction Ca(2+)(in) = Ca(2+)(out). It carries out the reaction methylamine(out) = methylamine(in). The enzyme catalyses choline(out) = choline(in). The catalysed reaction is H2O(in) = H2O(out). Forms paracellular channels: polymerizes in tight junction strands with cation- and water-selective channels through the strands, conveying epithelial permeability in a process known as paracellular tight junction permeability. In intestinal epithelium, allows for sodium and water fluxes from the peritoneal side to the lumen of the intestine to regulate nutrient absorption and clear enteric pathogens as part of mucosal immune response. In kidney, allows passive sodium and calcium reabsorption across proximal tubules from the lumen back to the bloodstream. In the hepatobiliary tract, allows paracellular water and cation fluxes in the hepatic perivenous areas and biliary epithelium to generate bile flow and maintain osmotic gradients. The polypeptide is Claudin-2 (Homo sapiens (Human)).